The primary structure comprises 388 residues: Cdc42 effector protein 1 (388 aa).

The tract at residues 1-28 is disordered; sequence MPGPQGGTGAPSMSLGKLSPVGWVPSSH. Phosphoserine is present on residues Ser19 and Ser27. A Phosphothreonine modification is found at Thr34. The CRIB domain occupies 38–52; sequence ISPPLGDFRHTMHVG. Ser39 carries the phosphoserine modification. Arg53 is subject to Omega-N-methylarginine. Phosphoserine is present on residues Ser65, Ser77, Ser101, Ser113, Ser121, and Ser139. The interval 165–206 is disordered; that stretch reads RLPRVEKHSSRDRDHDRDPDHSQDREQSSSPSEPNPNPELRR. Over residues 167–191 the composition is skewed to basic and acidic residues; that stretch reads PRVEKHSSRDRDHDRDPDHSQDREQ. 4 positions are modified to phosphoserine: Ser193, Ser207, Ser209, and Ser212. A run of 2 repeats spans residues 237-243 and 250-256. The disordered stretch occupies residues 237–257; it reads PAANPPAPAANPAPTAKPPAD. Positions 237-270 are 2 X 7 AA tandem repeats of [PT]-[AT]-A-[ENT]-[PT]-[PTS]-[AG]; sequence PAANPPAPAANPAPTAKPPADAVTTLDTVTSLPA. Residues 239–253 are compositionally biased toward pro residues; it reads ANPPAPAANPAPTAK. Ser298, Ser318, Ser347, and Ser350 each carry phosphoserine.

Belongs to the BORG/CEP family. As to quaternary structure, interacts with RHOQ and CDC42, in a GTP-dependent manner.

The protein resides in the endomembrane system. Its subcellular location is the cytoplasm. It localises to the cytoskeleton. Functionally, probably involved in the organization of the actin cytoskeleton. Induced membrane extensions in fibroblasts. The chain is Cdc42 effector protein 1 from Rattus norvegicus (Rat).